A 421-amino-acid polypeptide reads, in one-letter code: Indole-3-pyruvate monooxygenase YUCCA8 (421 aa).

Residue 30–35 participates in FAD binding; the sequence is GAGPSG. 201–206 is a binding site for NADP(+); it reads GCGNSG.

This sequence belongs to the FMO family. FAD is required as a cofactor. Expressed in organs undergoing active growth and cell division.

The protein resides in the endoplasmic reticulum. The enzyme catalyses indole-3-pyruvate + NADPH + O2 + H(+) = (indol-3-yl)acetate + CO2 + NADP(+) + H2O. Functionally, involved in auxin biosynthesis. Converts the indole-3-pyruvic acid (IPA) produced by the TAA family to indole-3-acetic acid (IAA). Seems not able to use tryptamine (TAM) as substrate. Probably responsible for auxin biosynthesis in leaves and involved in the regulation of lateral leaf growth. Required for maintaining water homeostasis and an appropriate root to shoot ratio. Required for the inhibition of root growth by ethylene in etiolated seedlings. Functions downstream of the ethylene-response transcription factor EIL1. In Oryza sativa subsp. indica (Rice), this protein is Indole-3-pyruvate monooxygenase YUCCA8.